The chain runs to 206 residues: Imidazoleglycerol-phosphate dehydratase (206 aa).

The protein belongs to the imidazoleglycerol-phosphate dehydratase family.

Its subcellular location is the cytoplasm. It carries out the reaction D-erythro-1-(imidazol-4-yl)glycerol 3-phosphate = 3-(imidazol-4-yl)-2-oxopropyl phosphate + H2O. The protein operates within amino-acid biosynthesis; L-histidine biosynthesis; L-histidine from 5-phospho-alpha-D-ribose 1-diphosphate: step 6/9. This is Imidazoleglycerol-phosphate dehydratase from Mycolicibacterium smegmatis (strain ATCC 700084 / mc(2)155) (Mycobacterium smegmatis).